Reading from the N-terminus, the 220-residue chain is Small ribosomal subunit protein uS3 (220 aa).

The 69-residue stretch at isoleucine 38–lysine 106 folds into the KH type-2 domain.

Belongs to the universal ribosomal protein uS3 family. As to quaternary structure, part of the 30S ribosomal subunit. Forms a tight complex with proteins S10 and S14.

Binds the lower part of the 30S subunit head. Binds mRNA in the 70S ribosome, positioning it for translation. This is Small ribosomal subunit protein uS3 from Lacticaseibacillus paracasei (strain ATCC 334 / BCRC 17002 / CCUG 31169 / CIP 107868 / KCTC 3260 / NRRL B-441) (Lactobacillus paracasei).